Here is a 322-residue protein sequence, read N- to C-terminus: tRNA-dihydrouridine(16) synthase (322 aa).

FMN contacts are provided by residues 8–10 and Q69; that span reads PME. C99 serves as the catalytic Proton donor. FMN-binding positions include K140, 200 to 202, and 224 to 225; these read NGD and GR.

It belongs to the Dus family. DusC subfamily. It depends on FMN as a cofactor.

It carries out the reaction 5,6-dihydrouridine(16) in tRNA + NADP(+) = uridine(16) in tRNA + NADPH + H(+). It catalyses the reaction 5,6-dihydrouridine(16) in tRNA + NAD(+) = uridine(16) in tRNA + NADH + H(+). Its function is as follows. Catalyzes the synthesis of 5,6-dihydrouridine (D), a modified base found in the D-loop of most tRNAs, via the reduction of the C5-C6 double bond in target uridines. Specifically modifies U16 in tRNAs. The chain is tRNA-dihydrouridine(16) synthase from Cupriavidus necator (strain ATCC 17699 / DSM 428 / KCTC 22496 / NCIMB 10442 / H16 / Stanier 337) (Ralstonia eutropha).